Consider the following 338-residue polypeptide: Probable cytosolic iron-sulfur protein assembly protein Ciao1 (338 aa).

8 WD repeats span residues 12–51 (GHRG…RWVP), 58–97 (GHTR…FECN), 102–141 (GHEN…EYEC), 147–186 (THSQ…SDWS), 193–232 (SHDS…NEFG), 234–252 (ACPD…LSGF), 253–291 (HSRA…PANE), and 302–338 (AHSQ…EDDE).

It belongs to the WD repeat CIA1 family.

In terms of biological role, essential component of the cytosolic iron-sulfur (Fe/S) protein assembly machinery. Required for the maturation of extramitochondrial Fe/S proteins. The sequence is that of Probable cytosolic iron-sulfur protein assembly protein Ciao1 from Culex quinquefasciatus (Southern house mosquito).